A 79-amino-acid chain; its full sequence is Sec-independent protein translocase protein TatA (79 aa).

Residues 1 to 21 (MGGISIWQLLIVALIVVLLFG) traverse the membrane as a helical segment. Residues 43–79 (MSSEEDKKALEDTEAAKTAQTTQQATEKKPESNKEQA) are disordered. Residues 46 to 57 (EEDKKALEDTEA) are compositionally biased toward basic and acidic residues. Residues 58 to 67 (AKTAQTTQQA) show a composition bias toward low complexity. Over residues 68–79 (TEKKPESNKEQA) the composition is skewed to basic and acidic residues.

This sequence belongs to the TatA/E family. In terms of assembly, the Tat system comprises two distinct complexes: a TatABC complex, containing multiple copies of TatA, TatB and TatC subunits, and a separate TatA complex, containing only TatA subunits. Substrates initially bind to the TatABC complex, which probably triggers association of the separate TatA complex to form the active translocon.

It localises to the cell inner membrane. In terms of biological role, part of the twin-arginine translocation (Tat) system that transports large folded proteins containing a characteristic twin-arginine motif in their signal peptide across membranes. TatA could form the protein-conducting channel of the Tat system. The chain is Sec-independent protein translocase protein TatA from Shewanella baltica (strain OS223).